Here is a 191-residue protein sequence, read N- to C-terminus: HTH-type transcriptional regulator SAR0097 (191 aa).

Positions 12 to 74 (AEYNQQIILT…AIMDKKVDQM (63 aa)) constitute an HTH tetR-type domain. The H-T-H motif DNA-binding region spans 37–56 (KMSDIAKISGVGVGTLYRHF).

This Staphylococcus aureus (strain MRSA252) protein is HTH-type transcriptional regulator SAR0097.